Here is a 368-residue protein sequence, read N- to C-terminus: Chorismate synthase (368 aa).

Positions 48 and 54 each coordinate NADP(+). Residues 125–127, 238–239, Gly278, 293–297, and Arg319 each bind FMN; these read RSS, NA, and KPTSS.

It belongs to the chorismate synthase family. Homotetramer. FMNH2 serves as cofactor.

It carries out the reaction 5-O-(1-carboxyvinyl)-3-phosphoshikimate = chorismate + phosphate. The protein operates within metabolic intermediate biosynthesis; chorismate biosynthesis; chorismate from D-erythrose 4-phosphate and phosphoenolpyruvate: step 7/7. In terms of biological role, catalyzes the anti-1,4-elimination of the C-3 phosphate and the C-6 proR hydrogen from 5-enolpyruvylshikimate-3-phosphate (EPSP) to yield chorismate, which is the branch point compound that serves as the starting substrate for the three terminal pathways of aromatic amino acid biosynthesis. This reaction introduces a second double bond into the aromatic ring system. In Methylibium petroleiphilum (strain ATCC BAA-1232 / LMG 22953 / PM1), this protein is Chorismate synthase.